A 348-amino-acid chain; its full sequence is NADH-ubiquinone oxidoreductase chain 2 (348 aa).

9 helical membrane-spanning segments follow: residues 1–21, 60–80, 96–116, 149–169, 177–194, 198–220, 238–258, 273–293, and 328–348; these read MSPY…TITA, FLTQ…NAWL, TLII…TWLP, NPTL…WGGL, ILAY…LILQ, TLTL…TFIL, ILTS…PLTG, DLAP…YFYL, and MAAS…LFNI.

The protein belongs to the complex I subunit 2 family.

The protein localises to the mitochondrion inner membrane. It catalyses the reaction a ubiquinone + NADH + 5 H(+)(in) = a ubiquinol + NAD(+) + 4 H(+)(out). Core subunit of the mitochondrial membrane respiratory chain NADH dehydrogenase (Complex I) that is believed to belong to the minimal assembly required for catalysis. Complex I functions in the transfer of electrons from NADH to the respiratory chain. The immediate electron acceptor for the enzyme is believed to be ubiquinone. In Tetraodon nigroviridis (Spotted green pufferfish), this protein is NADH-ubiquinone oxidoreductase chain 2 (MT-ND2).